Here is a 2118-residue protein sequence, read N- to C-terminus: Separin (2118 aa).

A Phosphoserine modification is found at Ser-1121. The segment covering Lys-1309–Ile-1318 has biased composition (basic residues). The tract at residues Lys-1309 to Gly-1352 is disordered. 2 positions are modified to phosphoserine: Ser-1391 and Ser-1394. The tract at residues Glu-1408 to Ser-1428 is disordered. Phosphoserine is present on Ser-1504. In terms of domain architecture, Peptidase C50 spans Pro-1941 to Leu-2036. Cys-2025 is an active-site residue.

Interacts with PTTG1. Interacts with RAD21. Post-translationally, autocleaves. This function, which is not essential for its protease activity, is unknown. In terms of processing, phosphorylated by CDK1. There is 8 Ser/Thr phosphorylation sites. Among them, only Ser-1121 phosphorylation is the major site, which conducts to the enzyme inactivation.

Its subcellular location is the cytoplasm. It is found in the nucleus. The enzyme catalyses All bonds known to be hydrolyzed by this endopeptidase have arginine in P1 and an acidic residue in P4. P6 is often occupied by an acidic residue or by a hydroxy-amino-acid residue, the phosphorylation of which enhances cleavage.. Its activity is regulated as follows. Regulated by at least two independent mechanisms. First, it is inactivated via its interaction with securin/PTTG1, which probably covers its active site. The association with PTTG1 is not only inhibitory, since PTTG1 is also required for activating it, the enzyme being inactive in cells in which PTTG1 is absent. PTTG1 degradation at anaphase, liberates it and triggers RAD21 cleavage. Second, phosphorylation at Ser-1121 inactivates it. The complete phosphorylation during mitosis, is removed when cells undergo anaphase. Activation of the enzyme at the metaphase-anaphase transition probably requires the removal of both securin and inhibitory phosphate. Functionally, caspase-like protease, which plays a central role in the chromosome segregation by cleaving the SCC1/RAD21 subunit of the cohesin complex at the onset of anaphase. During most of the cell cycle, it is inactivated by different mechanisms. The sequence is that of Separin (Espl1) from Mus musculus (Mouse).